The chain runs to 208 residues: Uracil phosphoribosyltransferase (208 aa).

Residues R78, R103, and 130–138 (DPMLATGGS) each bind 5-phospho-alpha-D-ribose 1-diphosphate. Residues I193 and 198 to 200 (GDA) each bind uracil. Residue D199 participates in 5-phospho-alpha-D-ribose 1-diphosphate binding.

This sequence belongs to the UPRTase family. Mg(2+) is required as a cofactor.

The enzyme catalyses UMP + diphosphate = 5-phospho-alpha-D-ribose 1-diphosphate + uracil. It functions in the pathway pyrimidine metabolism; UMP biosynthesis via salvage pathway; UMP from uracil: step 1/1. With respect to regulation, allosterically activated by GTP. Functionally, catalyzes the conversion of uracil and 5-phospho-alpha-D-ribose 1-diphosphate (PRPP) to UMP and diphosphate. This is Uracil phosphoribosyltransferase from Shewanella putrefaciens (strain CN-32 / ATCC BAA-453).